The sequence spans 557 residues: Intraflagellar transport protein 56 (557 aa).

Residues 1-30 (MLLSRMKPAVGGEASTSSNEKKRKNKSKKI) are disordered. Over residues 21–30 (KKRKNKSKKI) the composition is skewed to basic residues. TPR repeat units lie at residues 60–93 (EHADLWTGFCAFHVGDHKRAMEEYKALTLRPDCP), 95–128 (DVWVYLGCALFFLGLYKEAEEAALKGSKTQLQNR), 154–187 (TEDQLSLASIHYMRSHYQEAIDIYKRILLQNREF), and 471–504 (ANDCYKMGQFYYAAKAFDALERLDPNPEYWEGKR).

Belongs to the IFT56 family. In terms of assembly, component of the IFT complex B.

Its subcellular location is the cell projection. It is found in the cilium. Component of the intraflagellar transport (IFT) complex B required for transport of proteins in the motile cilium. Required for transport of specific ciliary cargo proteins related to motility, while it is neither required for IFT complex B assembly or motion nor for cilium assembly. Plays a key role in maintaining the integrity of the IFT complex B and the proper ciliary localization of the IFT complex B components. Essential for maintaining proper microtubule organization within the ciliary axoneme. The sequence is that of Intraflagellar transport protein 56 from Danio rerio (Zebrafish).